The sequence spans 432 residues: Putative transposase A625R (432 aa).

Zn(2+) contacts are provided by cysteine 375, cysteine 378, cysteine 393, and cysteine 395.

The protein in the N-terminal section; belongs to the transposase 2 family. It in the C-terminal section; belongs to the transposase 35 family.

In Chlorella (PBCV-1), this protein is Putative transposase A625R.